The chain runs to 202 residues: MSYLIPYVIEQTNRGERSYDIYSRLLKDRIVFLGTPIDDQVANVVIAQLLFLESEDPDKPVNLYINSPGGSVSAGLGIYDAMQHIKSPVNTTVVGMAASMAALLLAAGTGKRYALPNARVMIHQPHLSGVGGQVTDIEITAREAVKTKQLMAEILAKHSGQSVERILADTERDRWMSAQEAVEYGLVDEVLHPREKASRSAR.

S99 acts as the Nucleophile in catalysis. The active site involves H123.

This sequence belongs to the peptidase S14 family. In terms of assembly, fourteen ClpP subunits assemble into 2 heptameric rings which stack back to back to give a disk-like structure with a central cavity, resembling the structure of eukaryotic proteasomes.

It localises to the cytoplasm. The enzyme catalyses Hydrolysis of proteins to small peptides in the presence of ATP and magnesium. alpha-casein is the usual test substrate. In the absence of ATP, only oligopeptides shorter than five residues are hydrolyzed (such as succinyl-Leu-Tyr-|-NHMec, and Leu-Tyr-Leu-|-Tyr-Trp, in which cleavage of the -Tyr-|-Leu- and -Tyr-|-Trp bonds also occurs).. In terms of biological role, cleaves peptides in various proteins in a process that requires ATP hydrolysis. Has a chymotrypsin-like activity. Plays a major role in the degradation of misfolded proteins. The protein is ATP-dependent Clp protease proteolytic subunit 1 of Symbiobacterium thermophilum (strain DSM 24528 / JCM 14929 / IAM 14863 / T).